The primary structure comprises 436 residues: Trigger factor (436 aa).

A PPIase FKBP-type domain is found at 161–246 (EDQLNIDFVG…VNTVSEPKLP (86 aa)).

Belongs to the FKBP-type PPIase family. Tig subfamily.

It is found in the cytoplasm. It carries out the reaction [protein]-peptidylproline (omega=180) = [protein]-peptidylproline (omega=0). In terms of biological role, involved in protein export. Acts as a chaperone by maintaining the newly synthesized protein in an open conformation. Functions as a peptidyl-prolyl cis-trans isomerase. In Pseudomonas savastanoi pv. phaseolicola (strain 1448A / Race 6) (Pseudomonas syringae pv. phaseolicola (strain 1448A / Race 6)), this protein is Trigger factor.